The chain runs to 96 residues: Large ribosomal subunit protein bL25 (96 aa).

It belongs to the bacterial ribosomal protein bL25 family. In terms of assembly, part of the 50S ribosomal subunit; part of the 5S rRNA/L5/L18/L25 subcomplex. Contacts the 5S rRNA. Binds to the 5S rRNA independently of L5 and L18.

This is one of the proteins that binds to the 5S RNA in the ribosome where it forms part of the central protuberance. This is Large ribosomal subunit protein bL25 from Francisella tularensis subsp. tularensis (strain FSC 198).